Here is a 337-residue protein sequence, read N- to C-terminus: Thymidylate synthase (337 aa).

Residues Arg-74 and 199–200 each bind dUMP; that span reads RR. Catalysis depends on Cys-219, which acts as the Nucleophile. Residues 239-242, Asn-250, and 280-282 each bind dUMP; these read RSGD and HIY. Asp-242 contributes to the (6R)-5,10-methylene-5,6,7,8-tetrahydrofolate binding site. Position 336 (Ala-336) interacts with (6R)-5,10-methylene-5,6,7,8-tetrahydrofolate.

Belongs to the thymidylate synthase family. Homodimer.

The enzyme catalyses dUMP + (6R)-5,10-methylene-5,6,7,8-tetrahydrofolate = 7,8-dihydrofolate + dTMP. It participates in pyrimidine metabolism; dTTP biosynthesis. In Homo sapiens (Human), this protein is Thymidylate synthase (70).